We begin with the raw amino-acid sequence, 671 residues long: Replication protein A 70 kDa DNA-binding subunit (671 aa).

Disordered regions lie at residues 143 to 166 (QVSQPKQMVTPPVSNINKPTPAVN) and 190 to 219 (MNKTAPVKQNNNNNNNNNGNNKNNSSLQIS). Over residues 199–213 (NNNNNNNNNGNNKNN) the composition is skewed to low complexity. Residues 240–322 (QTIKVRITKK…NKGDHTVTVN (83 aa)) constitute a DNA-binding region (OB). Residues 530 to 549 (CFSCKKKIARNNEVWTCINC) form a C4-type zinc finger.

It belongs to the replication factor A protein 1 family. In terms of assembly, component of the replication protein A complex (RPA), a heterotrimeric complex composed of RPA1, RPA2/TEB2 and RPA3/TEB3.

In terms of biological role, as part of the heterotrimeric replication protein A (RPA) complex, binds and stabilizes single-stranded DNA intermediates, that form during DNA replication or upon DNA stress. It prevents their reannealing and in parallel, recruits and activates different proteins and complexes involved in DNA metabolism. Thereby, it plays an essential role both in DNA replication and the cellular response to DNA damage. In the cellular response to DNA damage, the RPA complex controls DNA repair and DNA damage checkpoint activation. The sequence is that of Replication protein A 70 kDa DNA-binding subunit from Tetrahymena thermophila (strain SB210).